We begin with the raw amino-acid sequence, 493 residues long: 3-octaprenyl-4-hydroxybenzoate carboxy-lyase (493 aa).

Mn(2+) is bound at residue Asn-172. Residues 175–177 (IYR), 189–191 (RWL), and 194–195 (RG) each bind prenylated FMN. Residue Glu-238 participates in Mn(2+) binding. Residue Asp-287 is the Proton donor of the active site.

The protein belongs to the UbiD family. In terms of assembly, homohexamer. Prenylated FMN serves as cofactor. The cofactor is Mn(2+).

The protein resides in the cell membrane. It catalyses the reaction a 4-hydroxy-3-(all-trans-polyprenyl)benzoate + H(+) = a 2-(all-trans-polyprenyl)phenol + CO2. The protein operates within cofactor biosynthesis; ubiquinone biosynthesis. Its function is as follows. Catalyzes the decarboxylation of 3-octaprenyl-4-hydroxy benzoate to 2-octaprenylphenol, an intermediate step in ubiquinone biosynthesis. The chain is 3-octaprenyl-4-hydroxybenzoate carboxy-lyase from Shewanella sediminis (strain HAW-EB3).